The primary structure comprises 211 residues: Metalloproteinase inhibitor 3 (211 aa).

The first 23 residues, 1–23 (MTPWLGLIVLLGSWSLGDWGAEA), serve as a signal peptide directing secretion. Cys-24 lines the Zn(2+) pocket. 2 involved in metalloproteinase-binding regions span residues 24–27 (CTCS) and 88–89 (ES). 6 disulfides stabilise this stretch: Cys-24/Cys-91, Cys-26/Cys-118, Cys-36/Cys-143, Cys-145/Cys-192, Cys-150/Cys-155, and Cys-163/Cys-184. The NTR domain occupies 24-143 (CTCSPSHPQD…GLNYRYHLGC (120 aa)). The interval 105-188 (TGRVYDGKMY…SKHYACIRQK (84 aa)) is mediates interaction with EFEMP1. A glycan (N-linked (GlcNAc...) asparagine) is linked at Asn-207.

Belongs to the protease inhibitor I35 (TIMP) family. In terms of assembly, interacts with EFEMP1. Interacts with KDR.

It is found in the secreted. The protein localises to the extracellular space. Its subcellular location is the extracellular matrix. Mediates a variety of processes including matrix regulation and turnover, inflammation, and angiogenesis, through reversible inhibition of zinc protease superfamily enzymes, primarily matrix metalloproteinases (MMPs). Regulates extracellular matrix (ECM) remodeling through inhibition of matrix metalloproteinases (MMP) including MMP-1, MMP-2, MMP-3, MMP-7, MMP-9, MMP-13, MMP-14 and MMP-15. Additionally, modulates the processing of amyloid precursor protein (APP) and apolipoprotein E receptor ApoER2 by inhibiting two alpha-secretases ADAM10 and ADAM17. Functions as a tumor suppressor and a potent inhibitor of angiogenesis. Exerts its anti-angiogenic effect by directly interacting with vascular endothelial growth factor (VEGF) receptor-2/KDR, preventing its binding to the VEGFA ligand. Selectively induces apoptosis in angiogenic endothelial cells through a caspase-independent cell death pathway. Mechanistically, inhibits matrix-induced focal adhesion kinase PTK2 tyrosine phosphorylation and association with paxillin/PXN and disrupts the incorporation of ITGB3, PTK2 and PXN into focal adhesion contacts on the matrix. The protein is Metalloproteinase inhibitor 3 (TIMP3) of Macaca mulatta (Rhesus macaque).